Consider the following 101-residue polypeptide: Ferredoxin Fdx2 (101 aa).

4Fe-4S ferredoxin-type domains follow at residues 1–29 (MATY…EGDE) and 31–64 (YVID…PNPQ). The [4Fe-4S] cluster site is built by cysteine 9, cysteine 12, cysteine 15, cysteine 19, cysteine 38, cysteine 41, cysteine 50, and cysteine 54.

Requires [4Fe-4S] cluster as cofactor.

Its function is as follows. Ferredoxins are iron-sulfur proteins that transfer electrons in a wide variety of metabolic reactions. Fdx2 can receive electrons from both FdR_A and FdR_B ferredoxin reductases, with a preference for FdR_B compared with FdR_A, and transfer the electrons to the cytochrome P450 CYP260A1. This chain is Ferredoxin Fdx2, found in Sorangium cellulosum (strain So ce56) (Polyangium cellulosum (strain So ce56)).